Reading from the N-terminus, the 498-residue chain is uncharacterized protein (498 aa).

11 helical membrane-spanning segments follow: residues Leu54 to Leu74, Val100 to Val120, Met128 to Ser148, Gly150 to Leu170, Ser188 to Leu208, Trp221 to Leu241, Val302 to Leu322, Tyr326 to Ser346, Ala353 to Ser373, Thr381 to Leu401, and Ala446 to Leu466.

It belongs to the major facilitator superfamily. Allantoate permease family.

It is found in the membrane. This is an uncharacterized protein from Schizosaccharomyces pombe (strain 972 / ATCC 24843) (Fission yeast).